The sequence spans 159 residues: NADH-quinone oxidoreductase subunit B (159 aa).

Residues cysteine 32, cysteine 33, cysteine 97, and cysteine 126 each contribute to the [4Fe-4S] cluster site.

The protein belongs to the complex I 20 kDa subunit family. NDH-1 is composed of 14 different subunits. Subunits NuoB, C, D, E, F, and G constitute the peripheral sector of the complex. [4Fe-4S] cluster is required as a cofactor.

It localises to the cell inner membrane. It carries out the reaction a quinone + NADH + 5 H(+)(in) = a quinol + NAD(+) + 4 H(+)(out). NDH-1 shuttles electrons from NADH, via FMN and iron-sulfur (Fe-S) centers, to quinones in the respiratory chain. The immediate electron acceptor for the enzyme in this species is believed to be ubiquinone. Couples the redox reaction to proton translocation (for every two electrons transferred, four hydrogen ions are translocated across the cytoplasmic membrane), and thus conserves the redox energy in a proton gradient. The sequence is that of NADH-quinone oxidoreductase subunit B from Helicobacter pylori (strain J99 / ATCC 700824) (Campylobacter pylori J99).